The primary structure comprises 290 residues: Potassium-transporting ATPase subunit beta (290 aa).

The Cytoplasmic segment spans residues 1–36 (MAALQEKKSCSQRMEEFQRYCWNPDTGQMLGRTLSR). Residues 37–57 (WVWISLYYVAFYVVMTGIFAL) traverse the membrane as a helical; Signal-anchor for type II membrane protein segment. Residues 58–290 (CIYTLMCTLD…KVEFKLTIQQ (233 aa)) lie on the Extracellular side of the membrane. 5 N-linked (GlcNAc...) asparagine glycosylation sites follow: asparagine 99, asparagine 103, asparagine 130, asparagine 146, and asparagine 161. A disulfide bridge connects residues cysteine 131 and cysteine 152. Cysteine 162 and cysteine 178 form a disulfide bridge. Asparagine 193 and asparagine 221 each carry an N-linked (GlcNAc...) asparagine glycan. The tract at residues 194-290 (STAPRADCTF…KVEFKLTIQQ (97 aa)) is immunoglobulin-like. Cysteines 201 and 262 form a disulfide.

The protein belongs to the X(+)/potassium ATPases subunit beta family. As to quaternary structure, the ATPase pump is composed of two subunits: alpha (catalytic) and beta (regulatory). Interacts with alpha subunit ATP12A; this interaction is required for the formation of a functionally active pump and targeting at the plasma membrane. Interacts (via N-terminus) with alpha subunit ATP4A (via the P-domain). In terms of processing, N-glycosylation is necessary for assembly and functional expression of the pump at the plasma membrane.

The protein resides in the apical cell membrane. The protein localises to the cell membrane. Functionally, the beta subunit of the gastric H(+)/K(+) ATPase pump which transports H(+) ions in exchange for K(+) ions across the apical membrane of parietal cells. Plays a structural and regulatory role in the assembly and membrane targeting of a functionally active pump. Within a transport cycle, the transfer of a H(+) ion across the membrane is coupled to ATP hydrolysis and is associated with a transient phosphorylation of the alpha subunit that shifts the pump conformation from inward-facing (E1) to outward-facing state (E2). Interacts with the phosphorylation domain of the alpha subunit and functions as a ratchet, stabilizing the lumenal-open E2 conformation and preventing the reverse reaction of the transport cycle. The sequence is that of Potassium-transporting ATPase subunit beta (ATP4B) from Canis lupus familiaris (Dog).